A 418-amino-acid polypeptide reads, in one-letter code: Glutamyl-tRNA reductase (418 aa).

Substrate-binding positions include T49–R52, S108, E113–Q115, and Q119. The Nucleophile role is filled by C50. G188–I193 serves as a coordination point for NADP(+).

It belongs to the glutamyl-tRNA reductase family. As to quaternary structure, homodimer.

It carries out the reaction (S)-4-amino-5-oxopentanoate + tRNA(Glu) + NADP(+) = L-glutamyl-tRNA(Glu) + NADPH + H(+). It participates in porphyrin-containing compound metabolism; protoporphyrin-IX biosynthesis; 5-aminolevulinate from L-glutamyl-tRNA(Glu): step 1/2. Catalyzes the NADPH-dependent reduction of glutamyl-tRNA(Glu) to glutamate 1-semialdehyde (GSA). The chain is Glutamyl-tRNA reductase from Aliivibrio fischeri (strain ATCC 700601 / ES114) (Vibrio fischeri).